The primary structure comprises 544 residues: Protein adenylyltransferase (544 aa).

Residues 63–216 (FDTAYLCHIH…LEPMQHLFED (154 aa)) enclose the Fido domain. ATP is bound by residues 93 to 94 (FA), 106 to 107 (RT), 163 to 167 (EGNGR), and arginine 170.

It localises to the secreted. The enzyme catalyses L-tyrosyl-[protein] + ATP = O-(5'-adenylyl)-L-tyrosyl-[protein] + diphosphate. The catalysed reaction is L-threonyl-[protein] + ATP = 3-O-(5'-adenylyl)-L-threonyl-[protein] + diphosphate. In terms of biological role, adenylyltransferase involved in virulence by mediating the addition of adenosine 5'-monophosphate (AMP) to specific residue of host target proteins. In Bartonella henselae (strain ATCC 49882 / DSM 28221 / CCUG 30454 / Houston 1) (Rochalimaea henselae), this protein is Protein adenylyltransferase (bepA).